Here is a 715-residue protein sequence, read N- to C-terminus: Fatty acid oxidation complex subunit alpha (715 aa).

The segment at 1–190 is enoyl-CoA hydratase; it reads MTTTSAFMLN…KAGLVDDVVP (190 aa). The segment at 306–714 is 3-hydroxyacyl-CoA dehydrogenase; it reads GPLNSVGILG…FWTNGETDQG (409 aa).

This sequence in the N-terminal section; belongs to the enoyl-CoA hydratase/isomerase family. The protein in the central section; belongs to the 3-hydroxyacyl-CoA dehydrogenase family. In terms of assembly, heterotetramer of two alpha chains (FadJ) and two beta chains (FadI).

The protein localises to the cytoplasm. It catalyses the reaction a (3S)-3-hydroxyacyl-CoA = a (2E)-enoyl-CoA + H2O. The enzyme catalyses a 4-saturated-(3S)-3-hydroxyacyl-CoA = a (3E)-enoyl-CoA + H2O. It carries out the reaction a (3S)-3-hydroxyacyl-CoA + NAD(+) = a 3-oxoacyl-CoA + NADH + H(+). The catalysed reaction is (3S)-3-hydroxybutanoyl-CoA = (3R)-3-hydroxybutanoyl-CoA. It functions in the pathway lipid metabolism; fatty acid beta-oxidation. Functionally, catalyzes the formation of a hydroxyacyl-CoA by addition of water on enoyl-CoA. Also exhibits 3-hydroxyacyl-CoA epimerase and 3-hydroxyacyl-CoA dehydrogenase activities. The sequence is that of Fatty acid oxidation complex subunit alpha from Salmonella paratyphi A (strain ATCC 9150 / SARB42).